The following is a 538-amino-acid chain: Putative cysteine ligase BshC (538 aa).

The protein belongs to the BshC family.

Its function is as follows. Involved in bacillithiol (BSH) biosynthesis. May catalyze the last step of the pathway, the addition of cysteine to glucosamine malate (GlcN-Mal) to generate BSH. The chain is Putative cysteine ligase BshC from Halalkalibacterium halodurans (strain ATCC BAA-125 / DSM 18197 / FERM 7344 / JCM 9153 / C-125) (Bacillus halodurans).